Reading from the N-terminus, the 472-residue chain is Divinyl ether synthase CYP74 (472 aa).

Cys425 provides a ligand contact to heme.

It belongs to the cytochrome P450 family. The cofactor is heme. Expressed mainly in bulbs, and at lower levels in roots.

The enzyme catalyses (13S)-hydroperoxy-(9Z,11E)-octadecadienoate = etheroleate + H2O. It carries out the reaction (13S)-hydroperoxy-(9Z,11E,15Z)-octadecatrienoate = etherolenate + H2O. It catalyses the reaction (9S)-hydroperoxy-(10E,12Z)-octadecadienoate = colneleate + H2O. The catalysed reaction is (9S)-hydroperoxy-(10E,12Z,15Z)-octadecatrienoate = colnelenate + H2O. Its pathway is lipid metabolism; oxylipin biosynthesis. Functionally, divinyl ether synthase involved in oxylipin biosynthesis. Catalyzes the conversion of (13S)-hydroperoxy-(9Z,11E)-octadecadienoate (13-HPOD) to etheroleate and (13S)-hydroperoxy-(9Z,11E,15Z)-octadecatrienoate (13-HPOT) to etherolenate. Catalyzes the conversion of (9S)-hydroperoxy-(10E,12Z)-octadecadienoate (9-HPOD) to colneleate and (9S)-hydroperoxy-(10E,12Z,15Z)-octadecatrienoate (9-HPOT) colnelenate. The sequence is that of Divinyl ether synthase CYP74 from Allium sativum (Garlic).